A 366-amino-acid chain; its full sequence is Beta sliding clamp (366 aa).

The protein belongs to the beta sliding clamp family. Forms a ring-shaped head-to-tail homodimer around DNA which binds and tethers DNA polymerases and other proteins to the DNA. The DNA replisome complex has a single clamp-loading complex (3 tau and 1 each of delta, delta', psi and chi subunits) which binds 3 Pol III cores (1 core on the leading strand and 2 on the lagging strand) each with a beta sliding clamp dimer. Additional proteins in the replisome are other copies of gamma, psi and chi, Ssb, DNA helicase and RNA primase.

The protein resides in the cytoplasm. In terms of biological role, confers DNA tethering and processivity to DNA polymerases and other proteins. Acts as a clamp, forming a ring around DNA (a reaction catalyzed by the clamp-loading complex) which diffuses in an ATP-independent manner freely and bidirectionally along dsDNA. Initially characterized for its ability to contact the catalytic subunit of DNA polymerase III (Pol III), a complex, multichain enzyme responsible for most of the replicative synthesis in bacteria; Pol III exhibits 3'-5' exonuclease proofreading activity. The beta chain is required for initiation of replication as well as for processivity of DNA replication. The sequence is that of Beta sliding clamp (dnaN) from Chlamydia muridarum (strain MoPn / Nigg).